We begin with the raw amino-acid sequence, 480 residues long: Vacuolar amino acid transporter 2 (480 aa).

Positions 21-48 are disordered; it reads LTNFPFPGTTDNDSDDGSQGQNSLNIIT. A compositionally biased stretch (polar residues) spans 37–46; the sequence is GSQGQNSLNI. 9 helical membrane passes run 72–92, 95–115, 145–165, 214–234, 263–283, 297–317, 338–358, 394–414, and 447–467; these read AFMNLANSILGAGIITQPFAI, AGILGGLLSYVALGFIVDWTL, LILFTNGLFAFGGCIGYCIII, LSKASFLAVISMIIIVLTVVI, LSVISFALVCHHNTSFIFFSM, ISIIISVICCALMGYSGFAVF, IARLCFGFNMLTTFPMEIFVL, VFITMGISLTTCNLGALFELI, and FYLCICFGFMIMIISSTQTII.

It belongs to the amino acid/polyamine transporter 2 family.

The protein resides in the vacuole membrane. Its function is as follows. Probable amino acid transporter of unknown specificity. The chain is Vacuolar amino acid transporter 2 (AVT2) from Saccharomyces cerevisiae (strain ATCC 204508 / S288c) (Baker's yeast).